Consider the following 338-residue polypeptide: Probable dual-specificity RNA methyltransferase RlmN (338 aa).

Residue E89 is the Proton acceptor of the active site. Residues 95–325 (HNYGMSACVT…AILRKEQGHD (231 aa)) enclose the Radical SAM core domain. C102 and C330 are disulfide-bonded. Positions 109, 113, and 116 each coordinate [4Fe-4S] cluster. S-adenosyl-L-methionine-binding positions include 156 to 157 (GE), S188, 211 to 213 (SLH), and N287. The S-methylcysteine intermediate role is filled by C330.

It belongs to the radical SAM superfamily. RlmN family. Requires [4Fe-4S] cluster as cofactor.

The protein localises to the cytoplasm. The catalysed reaction is adenosine(2503) in 23S rRNA + 2 reduced [2Fe-2S]-[ferredoxin] + 2 S-adenosyl-L-methionine = 2-methyladenosine(2503) in 23S rRNA + 5'-deoxyadenosine + L-methionine + 2 oxidized [2Fe-2S]-[ferredoxin] + S-adenosyl-L-homocysteine. It catalyses the reaction adenosine(37) in tRNA + 2 reduced [2Fe-2S]-[ferredoxin] + 2 S-adenosyl-L-methionine = 2-methyladenosine(37) in tRNA + 5'-deoxyadenosine + L-methionine + 2 oxidized [2Fe-2S]-[ferredoxin] + S-adenosyl-L-homocysteine. Functionally, specifically methylates position 2 of adenine 2503 in 23S rRNA and position 2 of adenine 37 in tRNAs. The chain is Probable dual-specificity RNA methyltransferase RlmN from Acholeplasma laidlawii (strain PG-8A).